We begin with the raw amino-acid sequence, 400 residues long: MAVLSAADASPVSAIGFEGYEKRLEITFSEAPVFVDPHGRGLRALSRAQIDSVLDLARCTIVSELSNKDFDSYVLSESSLFIYPLKIVIKTCGTTKLLLTIPRILELAEELSMPLAAVKYSRGTFIFPGAQPAPHRSFSEEVAALNRYFGGLKSGGNAYVIGDPARPGQKWHVFYATEYPEQPMVNLEMCMTGLDKKKACVFFKTNADGNTTCAKEMTKLSGISEIIPEMEICDFDFEPCGYSMNAIHGSAFSTIHVTPEDGFSYASYEVMGLDATALSYGDLVKRVLRCFGPSEFSVAVTIFGGRGHAGTWGKALGAEVYDCNNMVEQELPGGGLLVYQSFCAAEDAVATSPKSVFHCFDGENVESAPPPMKKDYKLANLLCWEEEADAMEEKAGVLDE.

Active-site residues include E18 and E21. The Schiff-base intermediate with substrate; via pyruvic acid role is filled by S78. S78 carries the post-translational modification Pyruvic acid (Ser); by autocatalysis. Residue C92 is the Proton donor; for catalytic activity of the active site. Active-site proton acceptor; for processing activity residues include S243 and H256.

This sequence belongs to the eukaryotic AdoMetDC family. The cofactor is pyruvate. Post-translationally, is synthesized initially as an inactive proenzyme. Formation of the active enzyme involves a self-maturation process in which the active site pyruvoyl group is generated from an internal serine residue via an autocatalytic post-translational modification. Two non-identical subunits are generated from the proenzyme in this reaction, and the pyruvate is formed at the N-terminus of the alpha chain, which is derived from the carboxyl end of the proenzyme. The post-translation cleavage follows an unusual pathway, termed non-hydrolytic serinolysis, in which the side chain hydroxyl group of the serine supplies its oxygen atom to form the C-terminus of the beta chain, while the remainder of the serine residue undergoes an oxidative deamination to produce ammonia and the pyruvoyl group blocking the N-terminus of the alpha chain.

The catalysed reaction is S-adenosyl-L-methionine + H(+) = S-adenosyl 3-(methylsulfanyl)propylamine + CO2. It participates in amine and polyamine biosynthesis; S-adenosylmethioninamine biosynthesis; S-adenosylmethioninamine from S-adenosyl-L-methionine: step 1/1. The protein is S-adenosylmethionine decarboxylase proenzyme (SAMDC) of Zea mays (Maize).